Here is a 740-residue protein sequence, read N- to C-terminus: Elongation factor 2 (740 aa).

The tr-type G domain maps to Ala-23 to Asn-264. GTP contacts are provided by residues Ala-32–Thr-39, Asp-98–His-102, and Asn-152–Asp-155. Diphthamide is present on His-605.

Belongs to the TRAFAC class translation factor GTPase superfamily. Classic translation factor GTPase family. EF-G/EF-2 subfamily.

The protein localises to the cytoplasm. Its function is as follows. Catalyzes the GTP-dependent ribosomal translocation step during translation elongation. During this step, the ribosome changes from the pre-translocational (PRE) to the post-translocational (POST) state as the newly formed A-site-bound peptidyl-tRNA and P-site-bound deacylated tRNA move to the P and E sites, respectively. Catalyzes the coordinated movement of the two tRNA molecules, the mRNA and conformational changes in the ribosome. This is Elongation factor 2 from Pyrobaculum neutrophilum (strain DSM 2338 / JCM 9278 / NBRC 100436 / V24Sta) (Thermoproteus neutrophilus).